The primary structure comprises 189 residues: Large ribosomal subunit protein bL12c (189 aa).

Disordered stretches follow at residues 1-30 (MAAT…HPQP) and 165-189 (EGVS…VSIV). Residues 1–56 (MAATTTMATLNLPSLTSHPNSSTFPKHPQPLQFPFRTTTNPISLSSTRTTRLRPIA) constitute a chloroplast transit peptide. Over residues 11–24 (NLPSLTSHPNSSTF) the composition is skewed to polar residues. Over residues 165-183 (EGVSKDDAEDAKKQLEDAG) the composition is skewed to basic and acidic residues.

As to quaternary structure, component of the chloroplast large ribosomal subunit (LSU). Mature 70S chloroplast ribosomes of higher plants consist of a small (30S) and a large (50S) subunit. The 30S small subunit contains 1 molecule of ribosomal RNA (16S rRNA) and 24 different proteins. The 50S large subunit contains 3 rRNA molecules (23S, 5S and 4.5S rRNA) and 33 different proteins.

Its subcellular location is the plastid. It localises to the chloroplast. In terms of biological role, component of the chloroplast ribosome (chloro-ribosome), a dedicated translation machinery responsible for the synthesis of chloroplast genome-encoded proteins, including proteins of the transcription and translation machinery and components of the photosynthetic apparatus. The polypeptide is Large ribosomal subunit protein bL12c (RPL12) (Spinacia oleracea (Spinach)).